Consider the following 268-residue polypeptide: Interferon alpha/beta receptor 2 (268 aa).

Residues 1-16 form the signal peptide; the sequence is MGPWTLLLLHLPLVVS. Residues 17 to 223 are Extracellular-facing; that stretch reads MLPAPTNVSI…TSPTAANTVP (207 aa). Fibronectin type-III domains are found at residues 18-114 and 115-217; these read LPAP…LTDT and LLGP…TSPT. Cystine bridges form between C65-C74 and C191-C211. Residues 224 to 244 traverse the membrane as a helical segment; the sequence is VVLSVLCAFSLLVVLLCGIVV. Residues 245 to 268 are Cytoplasmic-facing; sequence YSGRLLCMHKPLPKTLSSVPLCGG.

Belongs to the type II cytokine receptor family. In terms of assembly, heterodimer with IFNAR1; forming the receptor for type I interferon.

The protein resides in the cell membrane. The protein localises to the cytoplasm. Its function is as follows. Together with IFNAR1, forms the heterodimeric receptor for type I interferons (including interferons alpha, beta, epsilon, omega and kappa). Type I interferon binding activates the JAK-STAT signaling cascade, resulting in transcriptional activation or repression of interferon-regulated genes that encode the effectors of the interferon response. Mechanistically, type I interferon-binding brings the IFNAR1 and IFNAR2 subunits into close proximity with one another, driving their associated Janus kinases (JAKs) (TYK2 bound to IFNAR1 and JAK1 bound to IFNAR2) to cross-phosphorylate one another. The activated kinases phosphorylate specific tyrosine residues on the intracellular domains of IFNAR1 and IFNAR2, forming docking sites for the STAT transcription factors (STAT1, STAT2 and STAT). STAT proteins are then phosphorylated by the JAKs, promoting their translocation into the nucleus to regulate expression of interferon-regulated genes. The chain is Interferon alpha/beta receptor 2 from Oncorhynchus mykiss (Rainbow trout).